The sequence spans 314 residues: Small ribosomal subunit biogenesis GTPase RsgA (314 aa).

The interval 1–21 (MKRAPTKQPAKPAARGGERAQ) is disordered. Positions 85–246 (SDQFKSKLFA…LIDSPGFQEF (162 aa)) constitute a CP-type G domain. GTP is bound by residues 134–137 (NKID) and 188–196 (GQSGMGKST). 4 residues coordinate Zn(2+): Cys-270, Cys-275, His-277, and Cys-283.

It belongs to the TRAFAC class YlqF/YawG GTPase family. RsgA subfamily. In terms of assembly, monomer. Associates with 30S ribosomal subunit, binds 16S rRNA. Zn(2+) is required as a cofactor.

It is found in the cytoplasm. Functionally, one of several proteins that assist in the late maturation steps of the functional core of the 30S ribosomal subunit. Helps release RbfA from mature subunits. May play a role in the assembly of ribosomal proteins into the subunit. Circularly permuted GTPase that catalyzes slow GTP hydrolysis, GTPase activity is stimulated by the 30S ribosomal subunit. The chain is Small ribosomal subunit biogenesis GTPase RsgA from Burkholderia pseudomallei (strain 1106a).